The primary structure comprises 437 residues: MGNKPTISVSHLGCEKNRIDSEHMLGILAQQGYSIDANEELADYVIVNTCSFIQEAREESVRTLVELAEANKKIIISGCMAQHFQEQLLEELPEAVALVGTGDYQKIAEVIQRVETGERVTEVSQNPTFVADEMTPRYRTTNEAVAYLRVAEGCDYRCAFCIIPHLRGNQRSRSIESIVTEAQQLADQGVQEIILISQITTNYGLDLYGEPKLAELLRALGKVDIPWIRIHYAYPTGLTPKVIDAIRDTPNILPYLDLPLQHSHPAILKAMNRPWQGQVNDNIIERLKQSIPNAILRTTFIVGFPGETEEHFEHLINFVQRHEFDHVGVFTFSPEEETPAYQMPNQVPSEIAQARRNYLMEIQQPIAAKKNQKCVGQTVEVLIEQENPTTQEYIGRSIRFAPEVDGVVYVEGEGQLNSIIPVKITDADVYDLYGKVI.

The 112-residue stretch at 5–116 (PTISVSHLGC…IAEVIQRVET (112 aa)) folds into the MTTase N-terminal domain. C14, C50, C79, C154, C158, and C161 together coordinate [4Fe-4S] cluster. Residues 140–369 (TTNEAVAYLR…MEIQQPIAAK (230 aa)) enclose the Radical SAM core domain. A TRAM domain is found at 372 to 437 (QKCVGQTVEV…DVYDLYGKVI (66 aa)).

The protein belongs to the methylthiotransferase family. RimO subfamily. [4Fe-4S] cluster serves as cofactor.

It is found in the cytoplasm. The catalysed reaction is L-aspartate(89)-[ribosomal protein uS12]-hydrogen + (sulfur carrier)-SH + AH2 + 2 S-adenosyl-L-methionine = 3-methylsulfanyl-L-aspartate(89)-[ribosomal protein uS12]-hydrogen + (sulfur carrier)-H + 5'-deoxyadenosine + L-methionine + A + S-adenosyl-L-homocysteine + 2 H(+). Its function is as follows. Catalyzes the methylthiolation of an aspartic acid residue of ribosomal protein uS12. This is Ribosomal protein uS12 methylthiotransferase RimO from Crocosphaera subtropica (strain ATCC 51142 / BH68) (Cyanothece sp. (strain ATCC 51142)).